The primary structure comprises 414 residues: Translation initiation factor 2 subunit gamma (414 aa).

The tr-type G domain occupies 8 to 206; sequence QPEVNIGVVG…AIEKFIPTPP (199 aa). Residues 17–24 form a G1 region; it reads GHVDHGKT. 4 residues coordinate Mg(2+): D20, T24, G45, and T47. 20–25 provides a ligand contact to GTP; sequence DHGKTT. The G2 stretch occupies residues 45–49; the sequence is GMTIK. 4 residues coordinate Zn(2+): C60, C63, C75, and C77. Residues 93 to 96 are G3; the sequence is DAPG. GTP is bound by residues 149-152 and 184-186; these read NKVD and SAL. Positions 149–152 are G4; sequence NKVD. The segment at 184–186 is G5; sequence SAL.

It belongs to the TRAFAC class translation factor GTPase superfamily. Classic translation factor GTPase family. EIF2G subfamily. Heterotrimer composed of an alpha, a beta and a gamma chain. Requires Mg(2+) as cofactor.

The catalysed reaction is GTP + H2O = GDP + phosphate + H(+). Its function is as follows. eIF-2 functions in the early steps of protein synthesis by forming a ternary complex with GTP and initiator tRNA. This Aeropyrum pernix (strain ATCC 700893 / DSM 11879 / JCM 9820 / NBRC 100138 / K1) protein is Translation initiation factor 2 subunit gamma.